The primary structure comprises 253 residues: Imidazole glycerol phosphate synthase subunit HisF (253 aa).

Residues D11 and D130 contribute to the active site.

The protein belongs to the HisA/HisF family. As to quaternary structure, heterodimer of HisH and HisF.

It localises to the cytoplasm. It catalyses the reaction 5-[(5-phospho-1-deoxy-D-ribulos-1-ylimino)methylamino]-1-(5-phospho-beta-D-ribosyl)imidazole-4-carboxamide + L-glutamine = D-erythro-1-(imidazol-4-yl)glycerol 3-phosphate + 5-amino-1-(5-phospho-beta-D-ribosyl)imidazole-4-carboxamide + L-glutamate + H(+). Its pathway is amino-acid biosynthesis; L-histidine biosynthesis; L-histidine from 5-phospho-alpha-D-ribose 1-diphosphate: step 5/9. Functionally, IGPS catalyzes the conversion of PRFAR and glutamine to IGP, AICAR and glutamate. The HisF subunit catalyzes the cyclization activity that produces IGP and AICAR from PRFAR using the ammonia provided by the HisH subunit. The sequence is that of Imidazole glycerol phosphate synthase subunit HisF from Geotalea uraniireducens (strain Rf4) (Geobacter uraniireducens).